Reading from the N-terminus, the 1953-residue chain is TATA-binding protein-associated factor mot1 (1953 aa).

Residues 36-74 form an HEAT 1 repeat; the sequence is PDELYNLLGRVVPYLKSKNWDTRVAAAKAIGGIVENVPV. The tract at residues 79 to 141 is disordered; that stretch reads RTSPVKKEET…KLEEERLSTR (63 aa). Basic and acidic residues predominate over residues 98–108; the sequence is TEEKPFIKTEE. The segment covering 113 to 130 has biased composition (low complexity); sequence SSQSQVVVSSNLTSNSEV. A compositionally biased stretch (basic and acidic residues) spans 131–141; sequence SKLEEERLSTR. Ser-144 bears the Phosphoserine mark. Residues 240–278 are disordered; the sequence is DNVGSNSKGSPTTSIPEHKTSINNNKPEDTPTPSENVHL. Positions 242–276 are enriched in polar residues; the sequence is VGSNSKGSPTTSIPEHKTSINNNKPEDTPTPSENV. HEAT repeat units lie at residues 358–396, 513–551, 554–592, and 608–646; these read VWPF…YAGF, SDYL…KLVQ, LSSC…LCSF, and EFSF…VQTS. 2 disordered regions span residues 730-762 and 1078-1103; these read SGQP…KDDP and DDND…KSSL. HEAT repeat units follow at residues 1191-1229 and 1270-1311; these read QSEI…SNAA and VRIL…LVPL. Positions 1370–1543 constitute a Helicase ATP-binding domain; that stretch reads AFLNKYELHG…WSLFDFLMPG (174 aa). 1383-1390 is a binding site for ATP; sequence DDMGLGKT. Residues 1494 to 1497 carry the DEGH box motif; it reads DEGH. Residues 1580-1623 form an HEAT 8 repeat; sequence EAIHKQVLPFMLRRLKEDVLADLPPKIIQDYYCDMSDLQRKLLN. One can recognise a Helicase C-terminal domain in the interval 1725–1877; it reads GIDSALTNAV…STVVNQQNAG (153 aa). A disordered region spans residues 1901 to 1920; that stretch reads QNIDKEESEDAAGRGLSGTS.

It belongs to the SNF2/RAD54 helicase family. Forms a complex with TBP which binds TATA DNA.

It is found in the nucleus. Functionally, regulates transcription in association with TATA binding protein (TBP). Removes TBP from the TATA box via its ATPase activity. This chain is TATA-binding protein-associated factor mot1, found in Schizosaccharomyces pombe (strain 972 / ATCC 24843) (Fission yeast).